The chain runs to 167 residues: Troponin C-akin-1 protein (167 aa).

17 to 20 (YGAL) serves as a coordination point for substrate. The Proton acceptor role is filled by E92.

The protein belongs to the gamma-glutamylcyclotransferase family. In embryos, expression is seen in heart cells of the dorsal vessel and hindgut visceral mesoderm.

In terms of biological role, putative gamma-glutamylcyclotransferase. This is Troponin C-akin-1 protein (Tina-1) from Drosophila melanogaster (Fruit fly).